Consider the following 300-residue polypeptide: Ribosomal RNA small subunit methyltransferase H (300 aa).

Residues 33-35, aspartate 52, phenylalanine 79, aspartate 100, and glutamine 107 each bind S-adenosyl-L-methionine; that span reads GGH.

Belongs to the methyltransferase superfamily. RsmH family.

It is found in the cytoplasm. The enzyme catalyses cytidine(1402) in 16S rRNA + S-adenosyl-L-methionine = N(4)-methylcytidine(1402) in 16S rRNA + S-adenosyl-L-homocysteine + H(+). Its function is as follows. Specifically methylates the N4 position of cytidine in position 1402 (C1402) of 16S rRNA. The protein is Ribosomal RNA small subunit methyltransferase H of Mycoplasmopsis agalactiae (strain NCTC 10123 / CIP 59.7 / PG2) (Mycoplasma agalactiae).